A 120-amino-acid chain; its full sequence is NAD(P)H-quinone oxidoreductase subunit 3, chloroplastic (120 aa).

3 helical membrane passes run 9 to 29 (IFWA…LISG), 64 to 84 (MFAL…PWAM), and 88 to 108 (VLGV…IVGL).

Belongs to the complex I subunit 3 family. NDH is composed of at least 16 different subunits, 5 of which are encoded in the nucleus.

It localises to the plastid. The protein localises to the chloroplast thylakoid membrane. It carries out the reaction a plastoquinone + NADH + (n+1) H(+)(in) = a plastoquinol + NAD(+) + n H(+)(out). The catalysed reaction is a plastoquinone + NADPH + (n+1) H(+)(in) = a plastoquinol + NADP(+) + n H(+)(out). In terms of biological role, NDH shuttles electrons from NAD(P)H:plastoquinone, via FMN and iron-sulfur (Fe-S) centers, to quinones in the photosynthetic chain and possibly in a chloroplast respiratory chain. The immediate electron acceptor for the enzyme in this species is believed to be plastoquinone. Couples the redox reaction to proton translocation, and thus conserves the redox energy in a proton gradient. The protein is NAD(P)H-quinone oxidoreductase subunit 3, chloroplastic of Lupinus luteus (European yellow lupine).